Here is a 420-residue protein sequence, read N- to C-terminus: Light-independent protochlorophyllide reductase subunit N (420 aa).

The [4Fe-4S] cluster site is built by Cys21, Cys46, and Cys103.

Belongs to the BchN/ChlN family. In terms of assembly, protochlorophyllide reductase is composed of three subunits; BchL, BchN and BchB. Forms a heterotetramer of two BchB and two BchN subunits. It depends on [4Fe-4S] cluster as a cofactor.

The enzyme catalyses chlorophyllide a + oxidized 2[4Fe-4S]-[ferredoxin] + 2 ADP + 2 phosphate = protochlorophyllide a + reduced 2[4Fe-4S]-[ferredoxin] + 2 ATP + 2 H2O. Its pathway is porphyrin-containing compound metabolism; bacteriochlorophyll biosynthesis (light-independent). Its function is as follows. Component of the dark-operative protochlorophyllide reductase (DPOR) that uses Mg-ATP and reduced ferredoxin to reduce ring D of protochlorophyllide (Pchlide) to form chlorophyllide a (Chlide). This reaction is light-independent. The NB-protein (BchN-BchB) is the catalytic component of the complex. In Chlorobium phaeobacteroides (strain DSM 266 / SMG 266 / 2430), this protein is Light-independent protochlorophyllide reductase subunit N.